The chain runs to 124 residues: Large ribosomal subunit protein uL22 (124 aa).

Belongs to the universal ribosomal protein uL22 family. As to quaternary structure, part of the 50S ribosomal subunit.

Its function is as follows. This protein binds specifically to 23S rRNA; its binding is stimulated by other ribosomal proteins, e.g. L4, L17, and L20. It is important during the early stages of 50S assembly. It makes multiple contacts with different domains of the 23S rRNA in the assembled 50S subunit and ribosome. In terms of biological role, the globular domain of the protein is located near the polypeptide exit tunnel on the outside of the subunit, while an extended beta-hairpin is found that lines the wall of the exit tunnel in the center of the 70S ribosome. This is Large ribosomal subunit protein uL22 from Treponema pallidum (strain Nichols).